The sequence spans 259 residues: 3'-5' ssDNA/RNA exonuclease TatD (259 aa).

Glu92, His128, and His153 together coordinate a divalent metal cation.

The protein belongs to the metallo-dependent hydrolases superfamily. TatD-type hydrolase family. TatD subfamily. In terms of assembly, monomer. It depends on Mg(2+) as a cofactor.

Its subcellular location is the cytoplasm. Functionally, 3'-5' exonuclease that prefers single-stranded DNA and RNA. May play a role in the H(2)O(2)-induced DNA damage repair. This Erwinia tasmaniensis (strain DSM 17950 / CFBP 7177 / CIP 109463 / NCPPB 4357 / Et1/99) protein is 3'-5' ssDNA/RNA exonuclease TatD.